The primary structure comprises 735 residues: ATP-dependent DNA helicase Hel308 (735 aa).

ATP-binding positions include glutamine 32 and 50–57 (APTGSGKT). One can recognise a Helicase ATP-binding domain in the interval 37-201 (QAGVEKGENL…WIGGKIVESS (165 aa)). Positions 146 to 149 (DEIH) match the DEAH box motif. The region spanning 235–431 (DLDLAAEAIE…GLRGLRHFIL (197 aa)) is the Helicase C-terminal domain.

The protein belongs to the helicase family. Hel308 subfamily. As to quaternary structure, monomer.

The enzyme catalyses Couples ATP hydrolysis with the unwinding of duplex DNA by translocating in the 3'-5' direction.. It catalyses the reaction ATP + H2O = ADP + phosphate + H(+). DNA-dependent ATPase and 3'-5' DNA helicase that may be involved in repair of stalled replication forks. The chain is ATP-dependent DNA helicase Hel308 from Aeropyrum pernix (strain ATCC 700893 / DSM 11879 / JCM 9820 / NBRC 100138 / K1).